Here is a 475-residue protein sequence, read N- to C-terminus: Pyruvate kinase (475 aa).

Arg-36 lines the substrate pocket. K(+) is bound by residues Asn-38, Ser-40, and Asp-70. Position 38 to 41 (38 to 41 (NFSH)) interacts with ATP. 2 residues coordinate ATP: Arg-77 and Lys-158. Residue Glu-223 coordinates Mg(2+). Gly-246, Asp-247, and Thr-279 together coordinate substrate. Residue Asp-247 coordinates Mg(2+).

Belongs to the pyruvate kinase family. Homotetramer. A divalent metal cation serves as cofactor.

The enzyme catalyses pyruvate + ATP = phosphoenolpyruvate + ADP + H(+). It participates in carbohydrate degradation; glycolysis; pyruvate from D-glyceraldehyde 3-phosphate: step 5/5. This Thermococcus litoralis (strain ATCC 51850 / DSM 5473 / JCM 8560 / NS-C) protein is Pyruvate kinase (pki).